We begin with the raw amino-acid sequence, 156 residues long: Small ribosomal subunit protein uS7 (156 aa).

It belongs to the universal ribosomal protein uS7 family. Part of the 30S ribosomal subunit. Contacts proteins S9 and S11.

In terms of biological role, one of the primary rRNA binding proteins, it binds directly to 16S rRNA where it nucleates assembly of the head domain of the 30S subunit. Is located at the subunit interface close to the decoding center, probably blocks exit of the E-site tRNA. The polypeptide is Small ribosomal subunit protein uS7 (Streptococcus pneumoniae serotype 4 (strain ATCC BAA-334 / TIGR4)).